A 339-amino-acid polypeptide reads, in one-letter code: UDP-N-acetylglucosamine--N-acetylmuramyl-(pentapeptide) pyrophosphoryl-undecaprenol N-acetylglucosamine transferase (339 aa).

UDP-N-acetyl-alpha-D-glucosamine-binding positions include 10 to 12 (TGG), N124, R168, S188, I235, and Q280.

It belongs to the glycosyltransferase 28 family. MurG subfamily.

The protein localises to the cell inner membrane. It carries out the reaction di-trans,octa-cis-undecaprenyl diphospho-N-acetyl-alpha-D-muramoyl-L-alanyl-D-glutamyl-meso-2,6-diaminopimeloyl-D-alanyl-D-alanine + UDP-N-acetyl-alpha-D-glucosamine = di-trans,octa-cis-undecaprenyl diphospho-[N-acetyl-alpha-D-glucosaminyl-(1-&gt;4)]-N-acetyl-alpha-D-muramoyl-L-alanyl-D-glutamyl-meso-2,6-diaminopimeloyl-D-alanyl-D-alanine + UDP + H(+). It functions in the pathway cell wall biogenesis; peptidoglycan biosynthesis. Functionally, cell wall formation. Catalyzes the transfer of a GlcNAc subunit on undecaprenyl-pyrophosphoryl-MurNAc-pentapeptide (lipid intermediate I) to form undecaprenyl-pyrophosphoryl-MurNAc-(pentapeptide)GlcNAc (lipid intermediate II). The chain is UDP-N-acetylglucosamine--N-acetylmuramyl-(pentapeptide) pyrophosphoryl-undecaprenol N-acetylglucosamine transferase from Pseudothermotoga lettingae (strain ATCC BAA-301 / DSM 14385 / NBRC 107922 / TMO) (Thermotoga lettingae).